Here is a 306-residue protein sequence, read N- to C-terminus: Acetyl-coenzyme A carboxylase carboxyl transferase subunit beta (306 aa).

The CoA carboxyltransferase N-terminal domain maps to Leu-27–Pro-296. Residues Cys-31, Cys-34, Cys-50, and Cys-53 each contribute to the Zn(2+) site. The C4-type zinc-finger motif lies at Cys-31 to Cys-53.

It belongs to the AccD/PCCB family. As to quaternary structure, acetyl-CoA carboxylase is a heterohexamer composed of biotin carboxyl carrier protein (AccB), biotin carboxylase (AccC) and two subunits each of ACCase subunit alpha (AccA) and ACCase subunit beta (AccD). Zn(2+) is required as a cofactor.

The protein resides in the cytoplasm. It catalyses the reaction N(6)-carboxybiotinyl-L-lysyl-[protein] + acetyl-CoA = N(6)-biotinyl-L-lysyl-[protein] + malonyl-CoA. It functions in the pathway lipid metabolism; malonyl-CoA biosynthesis; malonyl-CoA from acetyl-CoA: step 1/1. In terms of biological role, component of the acetyl coenzyme A carboxylase (ACC) complex. Biotin carboxylase (BC) catalyzes the carboxylation of biotin on its carrier protein (BCCP) and then the CO(2) group is transferred by the transcarboxylase to acetyl-CoA to form malonyl-CoA. This is Acetyl-coenzyme A carboxylase carboxyl transferase subunit beta from Pseudomonas syringae pv. syringae (strain B728a).